We begin with the raw amino-acid sequence, 525 residues long: MLGRTLREVSAALKQGQVTPTELCKNCLSLIKKTKYLNAYITVSEEVALKQAEESEKRYKQGQSLGDLDGIPVAVKDNFSTTGIETTCASNMLKGYVPPYNATVVQKLLDQGALLMGKTNLDEFAMGSGSTDGVFGPVRNPWTYSKQYRERSRQDAGDDSHWLITGGSSGGSAAAVAAFTCFAALGSDTGGSTRNPAAHCGIVGFKPSYGLVSRHGLIPLVNSMDVPGILTRCVDDTAIVLGTLAGHDPKDSTTVRNPAQPASVPGGMDVSRLCIGIPKEYLVPELSSEVRSLWSQAADLFESEGAKVIEVSLPHTCYSIVCYHVLCTSEVASNMARFDGLQYGHRSGVDVSTEAMYAATRQEGFNDVVRGRILSGNFFLLKENYENYFVKAQKVRRLIVKDFVDVFESGVDVLLTPTTLTEAVPYLEFIKEDNRTRSAQDDIFTQAVNMAGLPAVSVPVALSNQGLPIGLQLIGRAFCDQQLLTVAKWFEKQVQFPVIQLQGLMDDGSLVLENGKLTSASLTQR.

Catalysis depends on charge relay system residues Lys-76 and Ser-168. The Acyl-ester intermediate role is filled by Ser-192.

This sequence belongs to the amidase family. GatA subfamily. In terms of assembly, subunit of the heterotrimeric GatCAB amidotransferase (AdT) complex, composed of A (QRSL1), B (GATB) and C (GATC) subunits.

The protein resides in the mitochondrion. It carries out the reaction L-glutamyl-tRNA(Gln) + L-glutamine + ATP + H2O = L-glutaminyl-tRNA(Gln) + L-glutamate + ADP + phosphate + H(+). Functionally, allows the formation of correctly charged Gln-tRNA(Gln) through the transamidation of misacylated Glu-tRNA(Gln) in the mitochondria. The reaction takes place in the presence of glutamine and ATP through an activated gamma-phospho-Glu-tRNA(Gln). The chain is Glutamyl-tRNA(Gln) amidotransferase subunit A, mitochondrial (Qrsl1) from Mus musculus (Mouse).